We begin with the raw amino-acid sequence, 211 residues long: Thiamine-phosphate synthase (211 aa).

Residues 39 to 41 (QLR) and N71 contribute to the 4-amino-2-methyl-5-(diphosphooxymethyl)pyrimidine site. Mg(2+) contacts are provided by D72 and D91. S110 serves as a coordination point for 4-amino-2-methyl-5-(diphosphooxymethyl)pyrimidine. 136 to 138 (TGT) contacts 2-[(2R,5Z)-2-carboxy-4-methylthiazol-5(2H)-ylidene]ethyl phosphate. K139 is a binding site for 4-amino-2-methyl-5-(diphosphooxymethyl)pyrimidine. 2-[(2R,5Z)-2-carboxy-4-methylthiazol-5(2H)-ylidene]ethyl phosphate is bound by residues G167 and 187–188 (VS).

The protein belongs to the thiamine-phosphate synthase family. Requires Mg(2+) as cofactor.

The catalysed reaction is 2-[(2R,5Z)-2-carboxy-4-methylthiazol-5(2H)-ylidene]ethyl phosphate + 4-amino-2-methyl-5-(diphosphooxymethyl)pyrimidine + 2 H(+) = thiamine phosphate + CO2 + diphosphate. It catalyses the reaction 2-(2-carboxy-4-methylthiazol-5-yl)ethyl phosphate + 4-amino-2-methyl-5-(diphosphooxymethyl)pyrimidine + 2 H(+) = thiamine phosphate + CO2 + diphosphate. The enzyme catalyses 4-methyl-5-(2-phosphooxyethyl)-thiazole + 4-amino-2-methyl-5-(diphosphooxymethyl)pyrimidine + H(+) = thiamine phosphate + diphosphate. It participates in cofactor biosynthesis; thiamine diphosphate biosynthesis; thiamine phosphate from 4-amino-2-methyl-5-diphosphomethylpyrimidine and 4-methyl-5-(2-phosphoethyl)-thiazole: step 1/1. Its function is as follows. Condenses 4-methyl-5-(beta-hydroxyethyl)thiazole monophosphate (THZ-P) and 2-methyl-4-amino-5-hydroxymethyl pyrimidine pyrophosphate (HMP-PP) to form thiamine monophosphate (TMP). The sequence is that of Thiamine-phosphate synthase from Xanthobacter autotrophicus (strain ATCC BAA-1158 / Py2).